A 509-amino-acid polypeptide reads, in one-letter code: Steroid 17-alpha-hydroxylase/17,20 lyase (509 aa).

Position 202 (Asn202) interacts with substrate. Residue Cys442 coordinates heme.

This sequence belongs to the cytochrome P450 family. Heme serves as cofactor.

The protein resides in the endoplasmic reticulum membrane. Its subcellular location is the microsome membrane. It carries out the reaction a C21-steroid + reduced [NADPH--hemoprotein reductase] + O2 = a 17alpha-hydroxy-C21-steroid + oxidized [NADPH--hemoprotein reductase] + H2O + H(+). The enzyme catalyses progesterone + reduced [NADPH--hemoprotein reductase] + O2 = 17alpha-hydroxyprogesterone + oxidized [NADPH--hemoprotein reductase] + H2O + H(+). It catalyses the reaction pregnenolone + reduced [NADPH--hemoprotein reductase] + O2 = 17alpha-hydroxypregnenolone + oxidized [NADPH--hemoprotein reductase] + H2O + H(+). The catalysed reaction is 17alpha-hydroxyprogesterone + reduced [NADPH--hemoprotein reductase] + O2 = androst-4-ene-3,17-dione + acetate + oxidized [NADPH--hemoprotein reductase] + H2O + 2 H(+). It carries out the reaction 17alpha-hydroxyprogesterone + reduced [NADPH--hemoprotein reductase] + O2 = 16alpha,17alpha-dihydroxyprogesterone + oxidized [NADPH--hemoprotein reductase] + H2O + H(+). The enzyme catalyses 16alpha,17alpha-dihydroxyprogesterone + reduced [NADPH--hemoprotein reductase] + O2 = 6beta,16alpha,17alpha-trihydroxyprogesterone + oxidized [NADPH--hemoprotein reductase] + H2O + H(+). It catalyses the reaction 17alpha-hydroxypregnenolone + reduced [NADPH--hemoprotein reductase] + O2 = 3beta-hydroxyandrost-5-en-17-one + acetate + oxidized [NADPH--hemoprotein reductase] + H2O + 2 H(+). The catalysed reaction is 16alpha,17alpha-dihydroxypregnenolone + reduced [NADPH--hemoprotein reductase] + O2 = 3beta,16alpha-dihydroxy-androst-5-en-17-one + acetate + oxidized [NADPH--hemoprotein reductase] + H2O + 2 H(+). It carries out the reaction 3beta-hydroxyandrost-5-en-17-one + reduced [NADPH--hemoprotein reductase] + O2 = 3beta,16alpha-dihydroxy-androst-5-en-17-one + oxidized [NADPH--hemoprotein reductase] + H2O + H(+). The enzyme catalyses androst-4-ene-3,17-dione + reduced [NADPH--hemoprotein reductase] + O2 = 16alpha-hydroxyandrost-4-ene-3,17-dione + oxidized [NADPH--hemoprotein reductase] + H2O + H(+). The protein operates within steroid hormone biosynthesis. It participates in steroid biosynthesis; glucocorticoid biosynthesis. Regulated predominantly by intracellular cAMP levels. The 17,20-lyase activity is stimulated by cytochrome b5, which acts as an allosteric effector increasing the Vmax of the lyase activity. Functionally, a cytochrome P450 monooxygenase involved in corticoid and androgen biosynthesis. Catalyzes 17-alpha hydroxylation of C21 steroids, which is common for both pathways. A second oxidative step, required only for androgen synthesis, involves an acyl-carbon cleavage. The 17-alpha hydroxy intermediates, as part of adrenal glucocorticoids biosynthesis pathway, are precursors of cortisol. Hydroxylates steroid hormones, pregnenolone and progesterone to form 17-alpha hydroxy metabolites, followed by the cleavage of the C17-C20 bond to form C19 steroids, dehydroepiandrosterone (DHEA) and androstenedione. Has 16-alpha hydroxylase activity. Catalyzes 16-alpha hydroxylation of 17-alpha hydroxy pregnenolone, followed by the cleavage of the C17-C20 bond to form 16-alpha-hydroxy DHEA. Also 16-alpha hydroxylates androgens, relevant for estriol synthesis. Mechanistically, uses molecular oxygen inserting one oxygen atom into a substrate, and reducing the second into a water molecule, with two electrons provided by NADPH via cytochrome P450 reductase (CPR; NADPH-ferrihemoprotein reductase). The chain is Steroid 17-alpha-hydroxylase/17,20 lyase (CYP17A1) from Ovis aries (Sheep).